A 247-amino-acid chain; its full sequence is Sugar fermentation stimulation protein homolog (247 aa).

This sequence belongs to the SfsA family.

The sequence is that of Sugar fermentation stimulation protein homolog from Methanococcoides burtonii (strain DSM 6242 / NBRC 107633 / OCM 468 / ACE-M).